A 291-amino-acid chain; its full sequence is Shikimate dehydrogenase (NADP(+)) (291 aa).

Residues 26 to 28 and S73 each bind shikimate; that span reads SLS. Residue K77 is the Proton acceptor of the active site. Residues N98 and D113 each contribute to the shikimate site. NADP(+) is bound by residues 137–141 and V238; that span reads GAGGA. Y240 provides a ligand contact to shikimate. An NADP(+)-binding site is contributed by G261.

Belongs to the shikimate dehydrogenase family. In terms of assembly, homodimer.

It catalyses the reaction shikimate + NADP(+) = 3-dehydroshikimate + NADPH + H(+). It functions in the pathway metabolic intermediate biosynthesis; chorismate biosynthesis; chorismate from D-erythrose 4-phosphate and phosphoenolpyruvate: step 4/7. In terms of biological role, involved in the biosynthesis of the chorismate, which leads to the biosynthesis of aromatic amino acids. Catalyzes the reversible NADPH linked reduction of 3-dehydroshikimate (DHSA) to yield shikimate (SA). The sequence is that of Shikimate dehydrogenase (NADP(+)) from Listeria innocua serovar 6a (strain ATCC BAA-680 / CLIP 11262).